Consider the following 249-residue polypeptide: Glutathione S-transferase tcpG (249 aa).

A GST N-terminal domain is found at 20–109 (LYVRKAIPAP…YLCDKHDKDG (90 aa)). The GST C-terminal domain maps to 115–249 (NATERAQVTS…TEEEIELHGR (135 aa)).

The protein belongs to the GST superfamily.

It carries out the reaction RX + glutathione = an S-substituted glutathione + a halide anion + H(+). Its pathway is secondary metabolite biosynthesis. In terms of biological role, glutathione S-transferase; part of the gene cluster that mediates the biosynthesis of an unusual class of epipolythiodioxopiperazines (ETPs) lacking the reactive thiol group important for toxicity. Firstly, L-tyrosine is prenylated by tcpD, before undergoing condensation with L-glycine in a reaction catalyzed by the NRPS tcpP leading to the diketopiperazine (DKP) backbone. Afterwards the alpha-carbon of tyrosine is oxidized by the cytochrome P450 tcpC to form a hydroxyl group. However, in contrast other ETP biosynthesis pathways studied so far, tcpC is not able to bishydroxylate the DKP at both alpha-carbon positions, but hydroxylates the alpha-carbon of the tyrosine part and the nitrogen of the glycine part. The next steps involve an alpha,beta-elimination reaction catalyzed by tcpI, a methylation by the methyltransferase tcpN the action of the four enzyme cascade tcpG/K/J/I. Due to a dysfunctional cytochrome P450 monooxygenase tcpC, the pathway leads to the biosynthesis of probable non-toxic metabolites lacking the reactive thiol group. In Claviceps purpurea (strain 20.1) (Ergot fungus), this protein is Glutathione S-transferase tcpG.